Consider the following 132-residue polypeptide: Arsenate reductase 1 (132 aa).

Residues Cys10, Cys82, and Cys89 each act as nucleophile in the active site. 2 disulfides stabilise this stretch: Cys10–Cys82 and Cys82–Cys89.

The protein belongs to the low molecular weight phosphotyrosine protein phosphatase family. Thioredoxin-coupled ArsC subfamily.

The protein localises to the cytoplasm. It carries out the reaction arsenate + [thioredoxin]-dithiol + H(+) = arsenite + [thioredoxin]-disulfide + H2O. Catalyzes the reduction of arsenate [As(V)] to arsenite [As(III)]. This Staphylococcus epidermidis (strain ATCC 35984 / DSM 28319 / BCRC 17069 / CCUG 31568 / BM 3577 / RP62A) protein is Arsenate reductase 1.